The following is a 219-amino-acid chain: UPF0502 protein HCH_06091 (219 aa).

The protein belongs to the UPF0502 family.

This Hahella chejuensis (strain KCTC 2396) protein is UPF0502 protein HCH_06091.